A 361-amino-acid chain; its full sequence is 4-hydroxytryptamine kinase (361 aa).

ATP-binding positions include Asn37, Lys57, and 118–120; that span reads QDV. Asp224 is a catalytic residue. 248–250 contacts ATP; the sequence is DWE.

This sequence belongs to the methylthioribose kinase family. As to quaternary structure, monomer. The cofactor is Mg(2+).

The catalysed reaction is 4-hydroxytryptamine + ATP = norbaeocystin + ADP + H(+). It catalyses the reaction psilocin + ATP = psilocybin + ADP + H(+). The enzyme catalyses 4-hydroxy-N,N,N-trimethyltryptamine + ATP = aeruginascin + ADP + H(+). Its pathway is secondary metabolite biosynthesis. 4-hydroxytryptamine kinase; part of the gene cluster that mediates the biosynthesis of psilocybin, a psychotropic tryptamine-derived natural product. The first step in the pathway is the decarboxylation of L-tryptophan to tryptamine by the decarboxylase psiD. PsiD does not decarboxylate phenylalanine, tyrosine, or 5-hydroxy- L -tryptophan (5-HTP). 4-hydroxy-L-tryptophan is accepted as substrate by psiD as well. The cytochrome P450 monooxygenase psiH then converts tryptamine to 4-hydroxytryptamine. The kinase psiK catalyzes the 4-O-phosphorylation step by converting 4-hydroxytryptamine into norbaeocystin. The methyltransferase psiM then catalyzes iterative methyl transfer to the amino group of norbaeocystin to yield psilocybin via a monomethylated intermediate, baeocystin. 4-hydroxy-6-methyl-l-tryptophancan also be converted the decarboxylase PsiD, kinase PsiK, and methyltransferase PsiM into respectively 6-methyl-norbaeocystin, 6-methylbaeocystin, and 6-methylpsilocybin. PsiK kinase can also turn psilocin into psilocybin. This activity may represent a protective mechanism to rephosphorylate the unstable psilocin to the stable psilocybin in case of intracellular ester cleavage. Moreover, psiK is able to O-phosphorylate the quaternary amine 4-hydroxy-N,N,N-trimethyltryptamine (4-OH-TMT) to yield aeruginascin, another bioactive compound found in Psilocybe species. The polypeptide is 4-hydroxytryptamine kinase (Psilocybe cyanescens).